Reading from the N-terminus, the 467-residue chain is Histone acetyltransferase type B catalytic subunit (467 aa).

The tract at residues 1–24 (MVQKQQASAGPGTEPKKRRRVGFS) is disordered. Residues 249–251 (ILV) and 256–262 (QGKGLGS) each bind acetyl-CoA. E283 (proton donor/acceptor) is an active-site residue.

This sequence belongs to the HAT1 family.

The protein resides in the nucleus. It localises to the cytoplasm. The enzyme catalyses L-lysyl-[protein] + acetyl-CoA = N(6)-acetyl-L-lysyl-[protein] + CoA + H(+). Functionally, acetylates soluble but not nucleosomal H4. Acetylates 'Lys-12' of histone H4. This is Histone acetyltransferase type B catalytic subunit (HAG2) from Arabidopsis thaliana (Mouse-ear cress).